A 185-amino-acid chain; its full sequence is Large ribosomal subunit protein uL22 (185 aa).

This sequence belongs to the universal ribosomal protein uL22 family. As to quaternary structure, part of the 50S ribosomal subunit.

This protein binds specifically to 23S rRNA. It makes multiple contacts with different domains of the 23S rRNA in the assembled 50S subunit and ribosome. Its function is as follows. The globular domain of the protein is located near the polypeptide exit tunnel on the outside of the subunit, while an extended beta-hairpin is found that lines the wall of the exit tunnel in the center of the 70S ribosome. In Pyrobaculum islandicum (strain DSM 4184 / JCM 9189 / GEO3), this protein is Large ribosomal subunit protein uL22.